We begin with the raw amino-acid sequence, 691 residues long: Elongation factor G (691 aa).

The region spanning 12–286 is the tr-type G domain; the sequence is KKLRNIGIMA…GVLEYLPSPL (275 aa). GTP is bound by residues 21–28, 85–89, and 139–142; these read AHIDAGKT, DTPGH, and NKMD.

It belongs to the TRAFAC class translation factor GTPase superfamily. Classic translation factor GTPase family. EF-G/EF-2 subfamily.

Its subcellular location is the cytoplasm. Catalyzes the GTP-dependent ribosomal translocation step during translation elongation. During this step, the ribosome changes from the pre-translocational (PRE) to the post-translocational (POST) state as the newly formed A-site-bound peptidyl-tRNA and P-site-bound deacylated tRNA move to the P and E sites, respectively. Catalyzes the coordinated movement of the two tRNA molecules, the mRNA and conformational changes in the ribosome. This chain is Elongation factor G, found in Thermosipho melanesiensis (strain DSM 12029 / CIP 104789 / BI429).